Consider the following 215-residue polypeptide: Cytochrome b6 (215 aa).

The chain crosses the membrane as a helical span at residues 32 to 52 (IFYCLGGITLTCFLIQVATGF). Cysteine 35 is a heme c binding site. Residues histidine 86 and histidine 100 each coordinate heme b. 3 helical membrane passes run 90 to 110 (ASMM…TGGF), 116 to 136 (LTWV…VTGY), and 186 to 206 (LHTF…FLMI). Positions 187 and 202 each coordinate heme b.

Belongs to the cytochrome b family. PetB subfamily. In terms of assembly, the 4 large subunits of the cytochrome b6-f complex are cytochrome b6, subunit IV (17 kDa polypeptide, PetD), cytochrome f and the Rieske protein, while the 4 small subunits are PetG, PetL, PetM and PetN. The complex functions as a dimer. Heme b is required as a cofactor. The cofactor is heme c.

The protein resides in the plastid. It is found in the chloroplast thylakoid membrane. Functionally, component of the cytochrome b6-f complex, which mediates electron transfer between photosystem II (PSII) and photosystem I (PSI), cyclic electron flow around PSI, and state transitions. This chain is Cytochrome b6, found in Spirogyra maxima (Green alga).